The following is a 741-amino-acid chain: Prestin (741 aa).

Over 1-79 (MDHVEETEIL…WLPAYRFKEY (79 aa)) the chain is Cytoplasmic. A helical transmembrane segment spans residues 80–105 (VLGDIVSGISTGVLQLPQGLAFAMLA). Residues 106 to 109 (AVPP) lie on the Extracellular side of the membrane. The chain crosses the membrane as a helical span at residues 110 to 125 (VFGLYSSFYPVIMYCF). The Cytoplasmic portion of the chain corresponds to 126 to 137 (FGTSRHISIGPF). Residues 138 to 147 (AVISLMIGGV) form a helical membrane-spanning segment. The Extracellular portion of the chain corresponds to 148 to 178 (AVRLVPDDIVIPGGVNATNSTEARDALRVKV). The Involved in motor function signature appears at 158–168 (IPGGVNATNST). N-linked (GlcNAc...) asparagine glycosylation is found at Asn163 and Asn166. Transmembrane regions (helical) follow at residues 179–208 (AMSV…LTEP) and 209–230 (LVRG…KYLF). At 231-243 (GVKTKRYSGIFSV) the chain is on the extracellular side. The helical intramembrane region spans 244–248 (VYSTV). Topologically, residues 249 to 261 (AVLQNVKNLNVCS) are extracellular. The chain crosses the membrane as a helical span at residues 262-283 (LGVGLMVFGLLLGGKEFNERFK). The Cytoplasmic segment spans residues 284–291 (EKLPAPIP). A helical transmembrane segment spans residues 292–303 (LEFFAVVMGTGI). The Extracellular portion of the chain corresponds to 304 to 338 (SAGFSLHESYNVDVVGTLPLGLLPPANPDTSLFHL). A helical transmembrane segment spans residues 339–361 (VYVDAIAIAIVGFSVTISMAKTL). The Cytoplasmic segment spans residues 362–370 (ANKHGYQVD). The chain crosses the membrane as a helical span at residues 371 to 388 (GNQELIALGLCNSTGSLF). Residues 389 to 396 (QTFAISCS) are Extracellular-facing. Residues 397–406 (LSRSLVQEGT) traverse the membrane as a helical segment. Residue Ser398 participates in salicylate binding. Residues 407–410 (GGKT) lie on the Cytoplasmic side of the membrane. Residues 411 to 429 (QLAGCLASLMILLVILATG) traverse the membrane as a helical segment. The Extracellular portion of the chain corresponds to 430–436 (FLFESLP). Residues 437-459 (QAVLSAIVIVNLKGMFMQFSDLP) form a helical membrane-spanning segment. The Cytoplasmic portion of the chain corresponds to 460–467 (FFWRTSKI). The chain crosses the membrane as a helical span at residues 468–483 (ELTIWLTTFVSSLFLG). Residue Leu484 is a topological domain, extracellular. The helical transmembrane segment at 485-498 (DYGLITAVIIALMT) threads the bilayer. Residues 499 to 741 (VIYRTQSPSY…DSEPNATPEA (243 aa)) are Cytoplasmic-facing. An extended region for STAS domain region spans residues 505-718 (SPSYIVLGQL…AVLGSQVREA (214 aa)). Residues 525 to 713 (AYEEVKEVPG…HSIHDAVLGS (189 aa)) enclose the STAS domain. The disordered stretch occupies residues 718-741 (ALAEQEATAAPPQEDSEPNATPEA). Over residues 721–730 (EQEATAAPPQ) the composition is skewed to low complexity.

This sequence belongs to the SLC26A/SulP transporter (TC 2.A.53) family. Homodimer. Interacts (via STAS domain) with CALM; this interaction is calcium-dependent and the STAS domain interacts with only one lobe of CALM which is an elongated conformation.

The protein resides in the cell membrane. The enzyme catalyses 2 hydrogencarbonate(in) + chloride(out) = 2 hydrogencarbonate(out) + chloride(in). Its function is as follows. Voltage-sensitive motor protein that drives outer hair cell (OHC) electromotility (eM) and participates in sound amplification in the hearing organ. Converts changes in the transmembrane electric potential into mechanical displacements resulting in the coupling of its expansion to movement of a charged voltage sensor across the lipid membrane. The nature of the voltage sensor is not completely clear, and two models compete. In the first model, acts as an incomplete transporter where intracellular chloride anion acts as extrinsic voltage sensor that drives conformational change in the protein which is sufficient to produce a length change in the plane of the membrane and hence in the length of the OHC. The second model in which multiple charged amino acid residues are distributed at the intracellular and extracellular membrane interfaces that form an intrinsic voltage sensor, whose movement produces the non-linear capacitance (NLC). However, the effective voltage sensor may be the result of a hybrid voltage sensor assembled from intrinsic charge (charged residues) and extrinsic charge (bound anion). Notably, binding of anions to the anion-binding pocket partially neutralizes the intrinsic positive charge rather than to form an electrically negative sensor, therefore remaining charge may serve as voltage sensor that, after depolarization, moves from down (expanded state) to up (contracted) conformation, which is accompanied by an eccentric contraction of the intermembrane cross-sectional area of the protein as well as a major increase in the hydrophobic thickness of the protein having as consequences the plasma membrane thickening and the cell contraction after membrane depolarization. The anion-binding pocket transits from the inward-open (Down) state, where it is exposed toward the intracellular solvent in the absence of anion, to the occluded (Up) state upon anion binding. Salicylate competes for the anion-binding site and inhibits the voltage-sensor movement, and therefore inhibits the charge transfer and electromotility by displacing Cl(-) from the anion-binding site and by preventing the structural transitions to the contracted state. In addition, can act as a weak Cl(-)/HCO3 (-) antiporter across the cell membrane and so regulate the intracellular pH of the outer hair cells (OHCs), while firstly found as being unable to mediate electrogenic anion transport. Moreover, supports a role in cardiac mechanical amplification serving as an elastic element to enhance the actomyosin- based sarcomere contraction system. In Tursiops truncatus (Atlantic bottle-nosed dolphin), this protein is Prestin.